The primary structure comprises 5125 residues: Usherin (5125 aa).

An N-terminal signal peptide occupies residues 1–33 (MYYLALSSGFLGQAIKTSILAYLASVLLAASQG). Asn120, Asn229, Asn257, Asn273, Asn414, Asn447, and Asn468 each carry an N-linked (GlcNAc...) asparagine glycan. In terms of domain architecture, Laminin N-terminal spans 273-513 (NVSLTNREIL…AVDEITIIGR (241 aa)). 39 disulfide bridges follow: Cys514-Cys523, Cys516-Cys532, Cys534-Cys545, Cys548-Cys568, Cys571-Cys580, Cys573-Cys601, Cys604-Cys613, Cys616-Cys634, Cys637-Cys651, Cys639-Cys658, Cys660-Cys669, Cys672-Cys687, Cys690-Cys704, Cys692-Cys711, Cys713-Cys722, Cys725-Cys740, Cys743-Cys755, Cys745-Cys762, Cys764-Cys773, Cys776-Cys788, Cys791-Cys804, Cys793-Cys811, Cys813-Cys822, Cys825-Cys840, Cys843-Cys857, Cys845-Cys864, Cys866-Cys875, Cys878-Cys893, Cys896-Cys909, Cys898-Cys916, Cys918-Cys927, Cys930-Cys944, Cys947-Cys959, Cys949-Cys966, Cys981-Cys995, Cys998-Cys1010, Cys1000-Cys1017, Cys1019-Cys1028, and Cys1031-Cys1046. 10 consecutive Laminin EGF-like domains span residues 514-570 (CQCH…NCKP), 571-636 (CQCH…VCKH), 637-689 (CDCN…CCRP), 690-742 (CDCN…GCEP), 743-790 (CHCN…ACEV), 791-842 (CDCN…LCLP), 843-895 (CNCE…GCQA), 896-946 (CDCD…GCLP), 947-997 (CLCH…RCRP), and 998-1048 (CHCH…ACSK). Residue Asn646 is glycosylated (N-linked (GlcNAc...) asparagine). N-linked (GlcNAc...) asparagine glycosylation is found at Asn835 and Asn852. N-linked (GlcNAc...) asparagine glycosylation occurs at Asn884. Asn940 is a glycosylation site (N-linked (GlcNAc...) asparagine). An N-linked (GlcNAc...) asparagine glycan is attached at Asn1007. Fibronectin type-III domains lie at 1054–1142 (PPPR…TKPE), 1146–1240 (GHLN…APPQ), 1241–1356 (RQEP…SAPV), and 1357–1461 (FMAA…AAPA). Residues Asn1067, Asn1149, Asn1170, Asn1221, Asn1304, and Asn1381 are each glycosylated (N-linked (GlcNAc...) asparagine). Laminin G-like domains lie at 1510-1697 (TKGT…WEGC) and 1702-1879 (EEGV…QDGC). Cystine bridges form between Cys1660-Cys1697 and Cys1850-Cys1879. Fibronectin type-III domains follow at residues 1857–1943 (TRGA…SAPH), 1945–2042 (VPTP…TPQE), 2043–2132 (APQE…LPPE), 2133–2230 (RVDP…TVPE), 2231–2318 (GVPA…APPE), 2319–2421 (GTVN…MPPG), 2425–2519 (GLLS…TTED), 2520–2613 (KPGP…TPEG), 2614–2709 (IPGP…TRPS), 2713–2806 (GVQP…THPA), 2807–2910 (LPQE…TLAG), 2914–3005 (RGAT…TWEE), 3009–3099 (GMRP…TPSG), 3380–3485 (ATEE…TRED), 3486–3577 (VPQG…TRGV), 3580–3670 (SVPP…AAPQ), 3672–3762 (VWVT…TPED), 3765–3852 (PPCN…TLEA), 3853–3950 (APVG…TLEA), 3951–4054 (PPQD…SAPS), 4055–4143 (GLMN…APPD), 4144–4251 (SQMA…APPD), 4252–4344 (GLSP…ASPA), 4345–4432 (GVSP…APPE), 4433–4517 (DMDP…TSPS), 4518–4620 (APSG…IPPL), 4625–4720 (PHLE…TGPA), 4721–4813 (PPEG…THPA), and 4814–4916 (PPSG…TKKE). The segment at 1930–1950 (SDWSRGRTLGSAPHSVPTPSR) is disordered.

As to quaternary structure, interacts with collagen IV and fibronectin via its laminin EGF-like domains. Interaction with collagen may be required for stable integration into the basement membrane. Interacts with NINL. Interacts with USH1C. Interacts (via the cytoplasmic region) with PDZD7. Component of USH2 complex, composed of ADGRV1, PDZD7, USH2A and WHRN. Interacts with ADGRV1/MASS1 (via N-terminal PDZ domain). Interacts (via the cytoplasmic region) with WHRN. Interacts (via the cytoplasmic region) with VEZT and MYO7A (via MyTH4-FERM domains); the interaction associates VEZT with the USH2 complex at the stereocilia base. As to expression, present in the synaptic terminals of inner ear hair cells (at protein level). Predominantly expressed in the retina and cochlea. Weakly expressed in brain and kidney. Detectable from E17 in the neural epithelium, but not in the retinal pigment epithelium (RPE) of the developing retina. After birth, it is expressed at P7 and remains expressed during adulthood.

It is found in the secreted. The protein localises to the cell projection. It localises to the stereocilium membrane. The protein resides in the photoreceptor inner segment. In terms of biological role, involved in hearing and vision as member of the USH2 complex. In the inner ear, required for the hair bundle ankle formation, which connects growing stereocilia in developing cochlear hair cells. In retina photoreceptors, the USH2 complex is required for the maintenance of periciliary membrane complex that seems to play a role in regulating intracellular protein transport. This Rattus norvegicus (Rat) protein is Usherin (Ush2a).